A 373-amino-acid polypeptide reads, in one-letter code: GDP-mannose 4,6-dehydratase (373 aa).

NADP(+) contacts are provided by residues 9 to 14 (GVTGQD), 64 to 65 (DL), 86 to 90 (LGAMS), and tyrosine 101. The active site involves threonine 133. Residues glutamate 135 and tyrosine 157 each act as nucleophile in the active site. Residues lysine 161, histidine 187, and arginine 192 each coordinate NADP(+).

The protein belongs to the NAD(P)-dependent epimerase/dehydratase family. GDP-mannose 4,6-dehydratase subfamily. It depends on NADP(+) as a cofactor.

It catalyses the reaction GDP-alpha-D-mannose = GDP-4-dehydro-alpha-D-rhamnose + H2O. It participates in nucleotide-sugar biosynthesis; GDP-L-fucose biosynthesis via de novo pathway; GDP-L-fucose from GDP-alpha-D-mannose: step 1/2. In terms of biological role, catalyzes the conversion of GDP-D-mannose to GDP-4-dehydro-6-deoxy-D-mannose. The polypeptide is GDP-mannose 4,6-dehydratase (Escherichia coli O157:H7).